The sequence spans 356 residues: D-alanine--D-alanine ligase (356 aa).

One can recognise an ATP-grasp domain in the interval 134 to 339; that stretch reads KQLFEHRGLP…YPELITKLIE (206 aa). Residue 167–222 coordinates ATP; that stretch reads NDKLNYPVFVKPANLGSSIGISKCSNEVELKEGIKEAFQFDRKLVIEQGVNAREIE. 3 residues coordinate Mg(2+): aspartate 293, glutamate 306, and asparagine 308.

Belongs to the D-alanine--D-alanine ligase family. It depends on Mg(2+) as a cofactor. Requires Mn(2+) as cofactor.

Its subcellular location is the cytoplasm. It catalyses the reaction 2 D-alanine + ATP = D-alanyl-D-alanine + ADP + phosphate + H(+). Its pathway is cell wall biogenesis; peptidoglycan biosynthesis. Its function is as follows. Cell wall formation. This chain is D-alanine--D-alanine ligase, found in Staphylococcus aureus (strain MRSA252).